The primary structure comprises 357 residues: Neurogenic differentiation factor 1 (357 aa).

The interval 1-94 (MTKSYSESGL…GPKKKKMTKA (94 aa)) is disordered. Positions 58–78 (EEEDEDEDLEEEEEEEEEEDD) are enriched in acidic residues. A compositionally biased stretch (basic residues) spans 81 to 93 (PKRRGPKKKKMTK). Residues 87–93 (KKKKMTK) carry the Nuclear localization signal motif. The region spanning 101–153 (LRRMKANARERNRMHGLNAALDNLRKVVPCYSKTQKLSKIETLRLAKNYIWAL) is the bHLH domain. Ser162, Ser259, Ser266, and Ser274 each carry phosphoserine. Phosphoserine; by CaMK2 is present on Ser336.

Efficient DNA-binding requires dimerization with another bHLH protein. Heterodimer with TCF3/E47; the heterodimer is inhibited in presence of ID2, but not NR0B2, to E-box element. Interacts with EP300; the interaction is inhibited by NR0B2. Interacts with RREB1. Interacts with ATOH8. Post-translationally, phosphorylated by MAPK1; phosphorylation regulates heterodimerization and DNA-binding activities. Phosphorylation on Ser-266 and Ser-274 increases transactivation on the insulin promoter in glucose-stimulated insulinoma cells. Phosphorylated. In islet cells, phosphorylated on Ser-274 upon glucose stimulation; which may be required for nuclear localization. In activated neurons, phosphorylated on Ser-336 by CaMK2; which promotes dendritic growth.

The protein resides in the cytoplasm. Its subcellular location is the nucleus. Its function is as follows. Acts as a transcriptional activator: mediates transcriptional activation by binding to E box-containing promoter consensus core sequences 5'-CANNTG-3'. Associates with the p300/CBP transcription coactivator complex to stimulate transcription of the secretin gene as well as the gene encoding the cyclin-dependent kinase inhibitor CDKN1A. Contributes to the regulation of several cell differentiation pathways, like those that promote the formation of early retinal ganglion cells, inner ear sensory neurons, granule cells forming either the cerebellum or the dentate gyrus cell layer of the hippocampus, endocrine islet cells of the pancreas and enteroendocrine cells of the small intestine. Together with PAX6 or SIX3, is required for the regulation of amacrine cell fate specification. Also required for dendrite morphogenesis and maintenance in the cerebellar cortex. Associates with chromatin to enhancer regulatory elements in genes encoding key transcriptional regulators of neurogenesis. This is Neurogenic differentiation factor 1 (Neurod1) from Rattus norvegicus (Rat).